The sequence spans 93 residues: Small ribosomal subunit protein uS19 (93 aa).

The protein belongs to the universal ribosomal protein uS19 family.

Functionally, protein S19 forms a complex with S13 that binds strongly to the 16S ribosomal RNA. The sequence is that of Small ribosomal subunit protein uS19 from Nitratidesulfovibrio vulgaris (strain DSM 19637 / Miyazaki F) (Desulfovibrio vulgaris).